The chain runs to 81 residues: ATP synthase subunit c, chloroplastic (81 aa).

Transmembrane regions (helical) follow at residues 3–23 and 57–77; these read PLIA…ASIG and LAFM…LLFA.

This sequence belongs to the ATPase C chain family. F-type ATPases have 2 components, F(1) - the catalytic core - and F(0) - the membrane proton channel. F(1) has five subunits: alpha(3), beta(3), gamma(1), delta(1), epsilon(1). F(0) has four main subunits: a(1), b(1), b'(1) and c(10-14). The alpha and beta chains form an alternating ring which encloses part of the gamma chain. F(1) is attached to F(0) by a central stalk formed by the gamma and epsilon chains, while a peripheral stalk is formed by the delta, b and b' chains.

Its subcellular location is the plastid. The protein resides in the chloroplast thylakoid membrane. In terms of biological role, f(1)F(0) ATP synthase produces ATP from ADP in the presence of a proton or sodium gradient. F-type ATPases consist of two structural domains, F(1) containing the extramembraneous catalytic core and F(0) containing the membrane proton channel, linked together by a central stalk and a peripheral stalk. During catalysis, ATP synthesis in the catalytic domain of F(1) is coupled via a rotary mechanism of the central stalk subunits to proton translocation. Functionally, key component of the F(0) channel; it plays a direct role in translocation across the membrane. A homomeric c-ring of between 10-14 subunits forms the central stalk rotor element with the F(1) delta and epsilon subunits. The chain is ATP synthase subunit c, chloroplastic from Agrostis stolonifera (Creeping bentgrass).